The primary structure comprises 78 residues: Acyl carrier protein (78 aa).

In terms of domain architecture, Carrier spans 2–77 (STIEERVKKI…AAIDYINGHQ (76 aa)). Serine 37 is subject to O-(pantetheine 4'-phosphoryl)serine.

Belongs to the acyl carrier protein (ACP) family. Post-translationally, 4'-phosphopantetheine is transferred from CoA to a specific serine of apo-ACP by AcpS. This modification is essential for activity because fatty acids are bound in thioester linkage to the sulfhydryl of the prosthetic group.

The protein localises to the cytoplasm. It functions in the pathway lipid metabolism; fatty acid biosynthesis. Carrier of the growing fatty acid chain in fatty acid biosynthesis. This chain is Acyl carrier protein, found in Shigella flexneri.